The following is a 426-amino-acid chain: Glutamate-1-semialdehyde 2,1-aminomutase (426 aa).

Lys-265 bears the N6-(pyridoxal phosphate)lysine mark.

This sequence belongs to the class-III pyridoxal-phosphate-dependent aminotransferase family. HemL subfamily. In terms of assembly, homodimer. The cofactor is pyridoxal 5'-phosphate.

The protein resides in the cytoplasm. The enzyme catalyses (S)-4-amino-5-oxopentanoate = 5-aminolevulinate. It participates in porphyrin-containing compound metabolism; protoporphyrin-IX biosynthesis; 5-aminolevulinate from L-glutamyl-tRNA(Glu): step 2/2. In Salmonella schwarzengrund (strain CVM19633), this protein is Glutamate-1-semialdehyde 2,1-aminomutase.